Reading from the N-terminus, the 417-residue chain is NADH-quinone oxidoreductase subunit D (417 aa).

Belongs to the complex I 49 kDa subunit family. NDH-1 is composed of 14 different subunits. Subunits NuoB, C, D, E, F, and G constitute the peripheral sector of the complex.

The protein resides in the cell inner membrane. It catalyses the reaction a quinone + NADH + 5 H(+)(in) = a quinol + NAD(+) + 4 H(+)(out). Functionally, NDH-1 shuttles electrons from NADH, via FMN and iron-sulfur (Fe-S) centers, to quinones in the respiratory chain. The immediate electron acceptor for the enzyme in this species is believed to be ubiquinone. Couples the redox reaction to proton translocation (for every two electrons transferred, four hydrogen ions are translocated across the cytoplasmic membrane), and thus conserves the redox energy in a proton gradient. The protein is NADH-quinone oxidoreductase subunit D of Polaromonas naphthalenivorans (strain CJ2).